The chain runs to 506 residues: CTL-like protein DDB_G0269978 (506 aa).

N-linked (GlcNAc...) asparagine glycosylation is found at Asn15 and Asn41. Helical transmembrane passes span 91-111 (LLYS…TVIA), 126-146 (LQGL…FLIW), 161-181 (SFFS…GNGW), 182-202 (YSWA…YFAF), 226-246 (TLLV…IWLF), 256-276 (SYWT…LYWT), 279-299 (VITY…YFFA), 323-343 (FGSI…QFIC), 345-367 (GFAR…ALIF), 371-393 (LYTF…CNSS), 416-436 (ITML…VTMI), and 447-467 (WLYV…DIIF).

Belongs to the CTL (choline transporter-like) family.

The protein resides in the membrane. The chain is CTL-like protein DDB_G0269978 from Dictyostelium discoideum (Social amoeba).